The chain runs to 88 residues: Small ribosomal subunit protein bS20 (88 aa).

The tract at residues 1-25 (MANSAQARKRVRQNNTRRQHAASQR) is disordered. Residues 7-20 (ARKRVRQNNTRRQH) are compositionally biased toward basic residues.

Belongs to the bacterial ribosomal protein bS20 family.

Functionally, binds directly to 16S ribosomal RNA. This chain is Small ribosomal subunit protein bS20, found in Psychrobacter sp. (strain PRwf-1).